Consider the following 400-residue polypeptide: Eukaryotic translation initiation factor 3 subunit M (400 aa).

The PCI domain maps to leucine 180–lysine 354.

The protein belongs to the eIF-3 subunit M family. Component of the eukaryotic translation initiation factor 3 (eIF-3) complex.

Its subcellular location is the cytoplasm. Component of the eukaryotic translation initiation factor 3 (eIF-3) complex, which is involved in protein synthesis of a specialized repertoire of mRNAs and, together with other initiation factors, stimulates binding of mRNA and methionyl-tRNAi to the 40S ribosome. The eIF-3 complex specifically targets and initiates translation of a subset of mRNAs involved in cell proliferation. This is Eukaryotic translation initiation factor 3 subunit M from Yarrowia lipolytica (strain CLIB 122 / E 150) (Yeast).